The sequence spans 101 residues: Integration host factor subunit alpha (101 aa).

Belongs to the bacterial histone-like protein family. As to quaternary structure, heterodimer of an alpha and a beta chain.

Its function is as follows. This protein is one of the two subunits of integration host factor, a specific DNA-binding protein that functions in genetic recombination as well as in transcriptional and translational control. The sequence is that of Integration host factor subunit alpha from Halorhodospira halophila (strain DSM 244 / SL1) (Ectothiorhodospira halophila (strain DSM 244 / SL1)).